The sequence spans 247 residues: Complement C1q subcomponent subunit A (247 aa).

The N-terminal stretch at 1-24 (MEAPRGWLVIMISVLAVSLASSAA) is a signal peptide. The segment at 26–116 (DTCRDLDGRD…NPGNIKDQRR (91 aa)) is disordered. Residues 27 to 38 (TCRDLDGRDGAA) are compositionally biased toward basic and acidic residues. The 79-residue stretch at 33–111 (GRDGAARKPG…KGIKGNPGNI (79 aa)) folds into the Collagen-like domain. Residues P41 and P47 each carry the 4-hydroxyproline modification. At K50 the chain carries 5-hydroxylysine. K50 carries an O-linked (Gal...) hydroxylysine glycan. A 4-hydroxyproline mark is found at P56 and P59. A 5-hydroxylysine modification is found at K69. K69 is a glycosylation site (O-linked (Gal...) hydroxylysine). A 4-hydroxyproline mark is found at P81 and P87. The span at 98-109 (LPGLKGIKGNPG) shows a compositional bias: low complexity. Position 102 is a 5-hydroxylysine (K102). K102 is a glycosylation site (O-linked (Gal...) hydroxylysine). The C1q domain occupies 112–247 (KDQRRPAFSA…FSGFLIFPST (136 aa)). C174 and C192 are joined by a disulfide. Position 201 (Q201) interacts with Ca(2+).

In terms of assembly, core component of the complement C1 complex, a calcium-dependent complex composed of 1 molecule of the C1Q subcomplex, 2 molecules of C1R and 2 molecules of C1S. The C1Q subcomplex is composed 18 subunits: 3 chains of C1QA, C1QB, and C1QC trimerize to form 6 collagen-like triple helices connected to six globular ligand-recognition modules (C1q domain). Interacts with CR1 (via Sushi 24 and Sushi 25 domains). Interacts (via C-terminus) with CD33; this interaction activates CD33 inhibitory motifs. O-linked glycans are assumed to be the Glc-Gal disaccharides typically found as secondary modifications of hydroxylated lysines in collagen-like domains.

The protein localises to the secreted. It is found in the cell surface. With respect to regulation, the C1Q subcomplex is inhibited by sulfated molecules, such as triterpenoid sulfates, heparan sulfate, or chondroitin sulfates. Core component of the complement C1 complex, a multiprotein complex that initiates the classical pathway of the complement system, a cascade of proteins that leads to phagocytosis and breakdown of pathogens and signaling that strengthens the adaptive immune system. The classical complement pathway is initiated by the C1Q subcomplex of the C1 complex, which specifically binds IgG or IgM immunoglobulins complexed with antigens, forming antigen-antibody complexes on the surface of pathogens: C1QA, together with C1QB and C1QC, specifically recognizes and binds the Fc regions of IgG or IgM via its C1q domain. Immunoglobulin-binding activates the proenzyme C1R, which cleaves C1S, initiating the proteolytic cascade of the complement system. The C1Q subcomplex is activated by a hexamer of IgG complexed with antigens, while it is activated by a pentameric IgM. The C1Q subcomplex also recognizes and binds phosphatidylserine exposed on the surface of cells undergoing programmed cell death, possibly promoting activation of the complement system. In Sus scrofa (Pig), this protein is Complement C1q subcomponent subunit A (C1QA).